Consider the following 214-residue polypeptide: Probable transaldolase (214 aa).

The Schiff-base intermediate with substrate role is filled by Lys-83.

This sequence belongs to the transaldolase family. Type 3B subfamily.

It localises to the cytoplasm. It carries out the reaction D-sedoheptulose 7-phosphate + D-glyceraldehyde 3-phosphate = D-erythrose 4-phosphate + beta-D-fructose 6-phosphate. The protein operates within carbohydrate degradation; pentose phosphate pathway; D-glyceraldehyde 3-phosphate and beta-D-fructose 6-phosphate from D-ribose 5-phosphate and D-xylulose 5-phosphate (non-oxidative stage): step 2/3. Transaldolase is important for the balance of metabolites in the pentose-phosphate pathway. This chain is Probable transaldolase, found in Streptococcus pyogenes serotype M2 (strain MGAS10270).